A 270-amino-acid polypeptide reads, in one-letter code: Urease accessory protein UreD (270 aa).

This sequence belongs to the UreD family. UreD, UreF and UreG form a complex that acts as a GTP-hydrolysis-dependent molecular chaperone, activating the urease apoprotein by helping to assemble the nickel containing metallocenter of UreC. The UreE protein probably delivers the nickel.

It localises to the cytoplasm. Required for maturation of urease via the functional incorporation of the urease nickel metallocenter. This Actinobacillus pleuropneumoniae serotype 5b (strain L20) protein is Urease accessory protein UreD.